The sequence spans 329 residues: uncharacterized protein (329 aa).

Coiled coils occupy residues 57–119 and 224–250; these read KKEE…LQEV and AQRQ…LGNV.

This is an uncharacterized protein from Macaca fascicularis (Crab-eating macaque).